The sequence spans 315 residues: Olfactory receptor 56A3 (315 aa).

Residues 1 to 29 lie on the Extracellular side of the membrane; that stretch reads MTTHRNDTLSTEASDFLLNCFVRSPSWQH. Asn-6 carries N-linked (GlcNAc...) asparagine glycosylation. The helical transmembrane segment at 30–50 threads the bilayer; sequence WLSLPLSLLFLLAVGANTTLL. Over 51–58 the chain is Cytoplasmic; sequence MTIWLEAS. A helical transmembrane segment spans residues 59–79; it reads LHQPLYYLLSLLSLLDIVLCL. Over 80–103 the chain is Extracellular; the sequence is TVIPKVLTIFWFDLRPISFPACFL. The cysteines at positions 101 and 193 are disulfide-linked. Residues 104-124 form a helical membrane-spanning segment; that stretch reads QMYIMNCFLAMESCTFMVMAY. Over 125 to 143 the chain is Cytoplasmic; it reads DRYVAICHPLRYPSIITDH. A helical transmembrane segment spans residues 144–164; it reads FVVKAAMFILTRNVLMTLPIP. Topologically, residues 165-200 are extracellular; that stretch reads ILSAQLRYCGRNVIENCICANMSVSRLSCDDVTINH. Residue Asn-185 is glycosylated (N-linked (GlcNAc...) asparagine). The helical transmembrane segment at 201–221 threads the bilayer; that stretch reads LYQFAGGWTLLGSDLILIFLS. Topologically, residues 222–241 are cytoplasmic; it reads YTFILRAVLRLKAEGAVAKA. The helical transmembrane segment at 242-262 threads the bilayer; the sequence is LSTCGSHFMLILFFSTILLVF. Residues 263–277 are Extracellular-facing; that stretch reads VLTHVAKKKVSPDVP. Residues 278 to 298 form a helical membrane-spanning segment; sequence VLLNVLHHVIPAALNPIIYGV. Topologically, residues 299-315 are cytoplasmic; it reads RTQEIKQGMQRLLKKGC.

This sequence belongs to the G-protein coupled receptor 1 family.

Its subcellular location is the cell membrane. Its function is as follows. Odorant receptor. The protein is Olfactory receptor 56A3 (OR56A3) of Homo sapiens (Human).